Consider the following 407-residue polypeptide: Phosphopentomutase (407 aa).

Mn(2+) contacts are provided by aspartate 10, aspartate 306, histidine 311, aspartate 347, histidine 348, and histidine 359.

The protein belongs to the phosphopentomutase family. Mn(2+) serves as cofactor.

Its subcellular location is the cytoplasm. The catalysed reaction is 2-deoxy-alpha-D-ribose 1-phosphate = 2-deoxy-D-ribose 5-phosphate. The enzyme catalyses alpha-D-ribose 1-phosphate = D-ribose 5-phosphate. The protein operates within carbohydrate degradation; 2-deoxy-D-ribose 1-phosphate degradation; D-glyceraldehyde 3-phosphate and acetaldehyde from 2-deoxy-alpha-D-ribose 1-phosphate: step 1/2. Functionally, isomerase that catalyzes the conversion of deoxy-ribose 1-phosphate (dRib-1-P) and ribose 1-phosphate (Rib-1-P) to deoxy-ribose 5-phosphate (dRib-5-P) and ribose 5-phosphate (Rib-5-P), respectively. In Yersinia enterocolitica serotype O:8 / biotype 1B (strain NCTC 13174 / 8081), this protein is Phosphopentomutase.